The following is a 115-amino-acid chain: MARSTGKDAQALFHSLRSAYAATPTTLKIIDLYVGFAVFTALIQVVYMAIVGSFPFNSFLSGVLSCVGTAVLAVCLRIQVNKDNKEFKDLPPERAFADFVLCNLVLHLVIMNFLG.

At 1–31 (MARSTGKDAQALFHSLRSAYAATPTTLKIID) the chain is on the cytoplasmic side. Residues 32 to 52 (LYVGFAVFTALIQVVYMAIVG) form a helical membrane-spanning segment. The Lumenal segment spans residues 53 to 55 (SFP). Residues 56–76 (FNSFLSGVLSCVGTAVLAVCL) form a helical membrane-spanning segment. Residues 77 to 94 (RIQVNKDNKEFKDLPPER) lie on the Cytoplasmic side of the membrane. Residues 95 to 115 (AFADFVLCNLVLHLVIMNFLG) traverse the membrane as a helical segment.

Belongs to the DAD/OST2 family. Component of the oligosaccharyltransferase (OST) complex.

It localises to the endoplasmic reticulum membrane. It functions in the pathway protein modification; protein glycosylation. Subunit of the oligosaccharyl transferase (OST) complex that catalyzes the initial transfer of a defined glycan (Glc(3)Man(9)GlcNAc(2) in eukaryotes) from the lipid carrier dolichol-pyrophosphate to an asparagine residue within an Asn-X-Ser/Thr consensus motif in nascent polypeptide chains, the first step in protein N-glycosylation. N-glycosylation occurs cotranslationally and the complex associates with the Sec61 complex at the channel-forming translocon complex that mediates protein translocation across the endoplasmic reticulum (ER). All subunits are required for a maximal enzyme activity. This Citrus unshiu (Satsuma mandarin) protein is Dolichyl-diphosphooligosaccharide--protein glycosyltransferase subunit DAD1 (DAD1).